We begin with the raw amino-acid sequence, 128 residues long: Large ribosomal subunit protein uL22 (128 aa).

The protein belongs to the universal ribosomal protein uL22 family. As to quaternary structure, part of the 50S ribosomal subunit.

In terms of biological role, this protein binds specifically to 23S rRNA; its binding is stimulated by other ribosomal proteins, e.g. L4, L17, and L20. It is important during the early stages of 50S assembly. It makes multiple contacts with different domains of the 23S rRNA in the assembled 50S subunit and ribosome. Functionally, the globular domain of the protein is located near the polypeptide exit tunnel on the outside of the subunit, while an extended beta-hairpin is found that lines the wall of the exit tunnel in the center of the 70S ribosome. The chain is Large ribosomal subunit protein uL22 from Rhodopseudomonas palustris (strain BisB18).